We begin with the raw amino-acid sequence, 333 residues long: Ketol-acid reductoisomerase (NADP(+)) (333 aa).

The KARI N-terminal Rossmann domain maps to 2–182; it reads ANIYYDADCD…GGGRAGILET (181 aa). Residues 25-28, Lys48, Ser51, Ser53, and 83-86 each bind NADP(+); these read YGSQ and DTIQ. His108 is an active-site residue. An NADP(+)-binding site is contributed by Gly134. The KARI C-terminal knotted domain maps to 183-331; it reads SFREETETDL…KKLRSMMKWL (149 aa). Positions 191, 195, 227, and 231 each coordinate Mg(2+). Substrate is bound at residue Ser252.

The protein belongs to the ketol-acid reductoisomerase family. The cofactor is Mg(2+).

The catalysed reaction is (2R)-2,3-dihydroxy-3-methylbutanoate + NADP(+) = (2S)-2-acetolactate + NADPH + H(+). It catalyses the reaction (2R,3R)-2,3-dihydroxy-3-methylpentanoate + NADP(+) = (S)-2-ethyl-2-hydroxy-3-oxobutanoate + NADPH + H(+). It participates in amino-acid biosynthesis; L-isoleucine biosynthesis; L-isoleucine from 2-oxobutanoate: step 2/4. Its pathway is amino-acid biosynthesis; L-valine biosynthesis; L-valine from pyruvate: step 2/4. Involved in the biosynthesis of branched-chain amino acids (BCAA). Catalyzes an alkyl-migration followed by a ketol-acid reduction of (S)-2-acetolactate (S2AL) to yield (R)-2,3-dihydroxy-isovalerate. In the isomerase reaction, S2AL is rearranged via a Mg-dependent methyl migration to produce 3-hydroxy-3-methyl-2-ketobutyrate (HMKB). In the reductase reaction, this 2-ketoacid undergoes a metal-dependent reduction by NADPH to yield (R)-2,3-dihydroxy-isovalerate. This chain is Ketol-acid reductoisomerase (NADP(+)), found in Leptospira borgpetersenii serovar Hardjo-bovis (strain JB197).